A 371-amino-acid polypeptide reads, in one-letter code: Cytoplasmic dynein intermediate light chain DYN3 (371 aa).

Belongs to the dynein light intermediate chain DYN3 family. In terms of assembly, the cytoplasmic dynein is composed of at least two heavy chains and a number of intermediate and light chains.

The protein localises to the cytoplasm. It is found in the cytoskeleton. In terms of biological role, component of the cytoplasmic dynein which acts as a motor for the intracellular retrograde motility of vesicles and organelles along microtubules. May play an important role in the proper orientation of the mitotic spindle into the budding daughter cell yeast. Probably required for normal progression of the cell cycle. The polypeptide is Cytoplasmic dynein intermediate light chain DYN3 (DYN3) (Eremothecium gossypii (strain ATCC 10895 / CBS 109.51 / FGSC 9923 / NRRL Y-1056) (Yeast)).